The chain runs to 154 residues: Ascorbate-specific PTS system EIIA component (154 aa).

The PTS EIIA type-2 domain maps to 6-150; the sequence is SLAENKSIRL…QEVLDLIDRT (145 aa). The Tele-phosphohistidine intermediate role is filled by histidine 68. Residue histidine 68 is modified to Phosphohistidine.

The protein localises to the cytoplasm. Functionally, the phosphoenolpyruvate-dependent sugar phosphotransferase system (sugar PTS), a major carbohydrate active transport system, catalyzes the phosphorylation of incoming sugar substrates concomitantly with their translocation across the cell membrane. The enzyme II UlaABC PTS system is involved in ascorbate transport. In Escherichia coli O157:H7, this protein is Ascorbate-specific PTS system EIIA component (ulaC).